Consider the following 454-residue polypeptide: Asparagine--tRNA ligase (454 aa).

Belongs to the class-II aminoacyl-tRNA synthetase family. In terms of assembly, homodimer.

The protein resides in the cytoplasm. The catalysed reaction is tRNA(Asn) + L-asparagine + ATP = L-asparaginyl-tRNA(Asn) + AMP + diphosphate + H(+). The polypeptide is Asparagine--tRNA ligase (Ureaplasma urealyticum serovar 10 (strain ATCC 33699 / Western)).